The primary structure comprises 302 residues: DDRGK domain-containing protein 1 (302 aa).

The Lumenal segment spans residues Met-1–Gly-5. Residues Gly-6 to Trp-26 traverse the membrane as a helical segment. Topologically, residues Arg-27–Leu-302 are cytoplasmic. Disordered regions lie at residues Leu-36–Arg-151 and Asp-279–Leu-302. Acidic residues predominate over residues Val-79 to Gln-91. Basic and acidic residues predominate over residues Lys-103–Arg-151.

The protein belongs to the DDRGK1 family.

It localises to the endoplasmic reticulum membrane. Functionally, substrate adapter for ufmylation, the covalent attachment of the ubiquitin-like modifier UFM1 to substrate proteins. The chain is DDRGK domain-containing protein 1 from Oryza sativa subsp. japonica (Rice).